The following is an 80-amino-acid chain: Clavanin-E (80 aa).

The first 19 residues, 1-19, serve as a signal peptide directing secretion; that stretch reads MKTTILILLILGLGINAKS. Positions 20–29 are excised as a propeptide; it reads LEERKSEEEK. F52 is subject to Phenylalanine amide. The propeptide occupies 54 to 80; the sequence is DDQQDNGKFYGYYAEDNGKHWYDTGDQ.

Its subcellular location is the secreted. Has antimicrobial activity. This is Clavanin-E from Styela clava (Sea squirt).